The primary structure comprises 195 residues: MEKKLLGIAILFVTVVSVLAGDPNVPTCLCEEPTLLGRKVIVSQETKDKIEEAVQAITDKDEISGRGFSIFGGHPAFKECGKYECRTVTSEDSRCYNFFPFHHFPSECPVSVSACEPTFGYTTSNELRIIVQAPKAGFRQCVWQHKCRAYGSNFCQRTGRCTQQRSVVRLVTYDLEKGVFFCENVRTCCGCPCRS.

The N-terminal stretch at 1 to 20 (MEKKLLGIAILFVTVVSVLA) is a signal peptide. 8 disulfides stabilise this stretch: C28–C188, C30–C115, C80–C182, C85–C141, C95–C189, C108–C161, C147–C191, and C155–C193.

It belongs to the coagulin family. As to quaternary structure, coagulogen is cleaved after Arg-38 and Arg-66 by a clotting enzyme contained in the hemocyte and activated by a bacterial endotoxin (lipopolysaccharide). This cleavage releases the peptide C and leaves 2 chains of coagulin, A and B, linked by two disulfide bonds. Coagulin molecules interlink to form a gel. In terms of tissue distribution, hemolymph.

Its subcellular location is the secreted. Functionally, coagulogen is a gel-forming protein of hemolymph; it hinders the spread of invaders by immobilizing them. The sequence is that of Coagulogen from Limulus polyphemus (Atlantic horseshoe crab).